Consider the following 304-residue polypeptide: GTPase Era (304 aa).

Residues K9–E176 form the Era-type G domain. The G1 stretch occupies residues G17–S24. G17–S24 is a binding site for GTP. Residues Q43 to N47 form a G2 region. The interval D64–G67 is G3. GTP contacts are provided by residues D64–I68 and N126–D129. The G4 stretch occupies residues N126–D129. Residues V155–A157 are G5. One can recognise a KH type-2 domain in the interval I199–K285.

Belongs to the TRAFAC class TrmE-Era-EngA-EngB-Septin-like GTPase superfamily. Era GTPase family. As to quaternary structure, monomer.

The protein localises to the cytoplasm. Its subcellular location is the cell membrane. Functionally, an essential GTPase that binds both GDP and GTP, with rapid nucleotide exchange. Plays a role in 16S rRNA processing and 30S ribosomal subunit biogenesis and possibly also in cell cycle regulation and energy metabolism. The polypeptide is GTPase Era (Halalkalibacterium halodurans (strain ATCC BAA-125 / DSM 18197 / FERM 7344 / JCM 9153 / C-125) (Bacillus halodurans)).